The primary structure comprises 160 residues: Ribosomal RNA large subunit methyltransferase H (160 aa).

S-adenosyl-L-methionine is bound by residues Leu-76, Gly-108, and 127–132 (FGRMTF).

The protein belongs to the RNA methyltransferase RlmH family. As to quaternary structure, homodimer.

The protein resides in the cytoplasm. It carries out the reaction pseudouridine(1915) in 23S rRNA + S-adenosyl-L-methionine = N(3)-methylpseudouridine(1915) in 23S rRNA + S-adenosyl-L-homocysteine + H(+). In terms of biological role, specifically methylates the pseudouridine at position 1915 (m3Psi1915) in 23S rRNA. The polypeptide is Ribosomal RNA large subunit methyltransferase H (Methylocella silvestris (strain DSM 15510 / CIP 108128 / LMG 27833 / NCIMB 13906 / BL2)).